Here is a 373-residue protein sequence, read N- to C-terminus: Peptide chain release factor 2 (373 aa).

Gln251 bears the N5-methylglutamine mark.

The protein belongs to the prokaryotic/mitochondrial release factor family. In terms of processing, methylated by PrmC. Methylation increases the termination efficiency of RF2.

It localises to the cytoplasm. Functionally, peptide chain release factor 2 directs the termination of translation in response to the peptide chain termination codons UGA and UAA. This is Peptide chain release factor 2 from Salinispora arenicola (strain CNS-205).